Consider the following 321-residue polypeptide: Glucokinase (321 aa).

8–13 (GDVGGT) contributes to the ATP binding site.

It belongs to the bacterial glucokinase family.

The protein resides in the cytoplasm. The enzyme catalyses D-glucose + ATP = D-glucose 6-phosphate + ADP + H(+). In Pectobacterium atrosepticum (strain SCRI 1043 / ATCC BAA-672) (Erwinia carotovora subsp. atroseptica), this protein is Glucokinase.